The chain runs to 95 residues: Putative regulatory protein STH1338 (95 aa).

It belongs to the RemA family.

The protein is Putative regulatory protein STH1338 of Symbiobacterium thermophilum (strain DSM 24528 / JCM 14929 / IAM 14863 / T).